Here is a 354-residue protein sequence, read N- to C-terminus: Kelch domain-containing protein 8B (354 aa).

Kelch repeat units follow at residues 1-31 (MAAGGGQAFAWQVFPPMPTCRVYGTVAHQDG), 32-79 (HLLV…VLGK), 81-127 (VLVV…ERDG), 128-175 (MVYA…LHGN), 176-222 (KIYV…MAEG), 224-281 (VFSL…SLGG), 282-329 (NIVA…QAGP), and 331-354 (LFVIGGVAQGPSQAVEALCLRDGV).

The protein localises to the cytoplasm. It localises to the midbody. Functionally, involved in pinching off the separated nuclei at the cleavage furrow and in cytokinesis. Required for mitotic integrity and maintenance of chromosomal stability. Protects cells against mitotic errors, centrosomal amplification, micronucleus formation and aneuploidy. Plays a key role of midbody function involving abscission of the daughter cells during cytokinesis and appropriate chromosomal and nuclear segregation into the daughter cells. This chain is Kelch domain-containing protein 8B (Klhdc8b), found in Rattus norvegicus (Rat).